Here is a 488-residue protein sequence, read N- to C-terminus: Glycogen synthase (488 aa).

Residue K17 coordinates ADP-alpha-D-glucose.

Belongs to the glycosyltransferase 1 family. Bacterial/plant glycogen synthase subfamily.

It catalyses the reaction [(1-&gt;4)-alpha-D-glucosyl](n) + ADP-alpha-D-glucose = [(1-&gt;4)-alpha-D-glucosyl](n+1) + ADP + H(+). The protein operates within glycan biosynthesis; glycogen biosynthesis. Its function is as follows. Synthesizes alpha-1,4-glucan chains using ADP-glucose. The polypeptide is Glycogen synthase (Nitratidesulfovibrio vulgaris (strain DSM 19637 / Miyazaki F) (Desulfovibrio vulgaris)).